Consider the following 451-residue polypeptide: Bifunctional protein GlmU (451 aa).

The interval methionine 1–arginine 225 is pyrophosphorylase. Residues leucine 7–glycine 10, lysine 21, glutamine 72, glycine 77–threonine 78, tyrosine 99–aspartate 101, glycine 136, glutamate 150, asparagine 165, and asparagine 223 each bind UDP-N-acetyl-alpha-D-glucosamine. Aspartate 101 is a Mg(2+) binding site. Asparagine 223 contributes to the Mg(2+) binding site. A linker region spans residues leucine 226–alanine 246. The segment at glycine 247–lysine 451 is N-acetyltransferase. UDP-N-acetyl-alpha-D-glucosamine contacts are provided by arginine 329 and lysine 347. Histidine 359 functions as the Proton acceptor in the catalytic mechanism. The UDP-N-acetyl-alpha-D-glucosamine site is built by tyrosine 362 and asparagine 373. Acetyl-CoA is bound by residues alanine 376, asparagine 382–tyrosine 383, serine 401, alanine 419, and arginine 436.

It in the N-terminal section; belongs to the N-acetylglucosamine-1-phosphate uridyltransferase family. The protein in the C-terminal section; belongs to the transferase hexapeptide repeat family. Homotrimer. Requires Mg(2+) as cofactor.

It is found in the cytoplasm. It carries out the reaction alpha-D-glucosamine 1-phosphate + acetyl-CoA = N-acetyl-alpha-D-glucosamine 1-phosphate + CoA + H(+). The enzyme catalyses N-acetyl-alpha-D-glucosamine 1-phosphate + UTP + H(+) = UDP-N-acetyl-alpha-D-glucosamine + diphosphate. Its pathway is nucleotide-sugar biosynthesis; UDP-N-acetyl-alpha-D-glucosamine biosynthesis; N-acetyl-alpha-D-glucosamine 1-phosphate from alpha-D-glucosamine 6-phosphate (route II): step 2/2. It participates in nucleotide-sugar biosynthesis; UDP-N-acetyl-alpha-D-glucosamine biosynthesis; UDP-N-acetyl-alpha-D-glucosamine from N-acetyl-alpha-D-glucosamine 1-phosphate: step 1/1. It functions in the pathway bacterial outer membrane biogenesis; LPS lipid A biosynthesis. In terms of biological role, catalyzes the last two sequential reactions in the de novo biosynthetic pathway for UDP-N-acetylglucosamine (UDP-GlcNAc). The C-terminal domain catalyzes the transfer of acetyl group from acetyl coenzyme A to glucosamine-1-phosphate (GlcN-1-P) to produce N-acetylglucosamine-1-phosphate (GlcNAc-1-P), which is converted into UDP-GlcNAc by the transfer of uridine 5-monophosphate (from uridine 5-triphosphate), a reaction catalyzed by the N-terminal domain. This Saccharophagus degradans (strain 2-40 / ATCC 43961 / DSM 17024) protein is Bifunctional protein GlmU.